Consider the following 468-residue polypeptide: Beta-monoglucosyldiacylglycerol synthase (468 aa).

The next 4 membrane-spanning stretches (helical) occupy residues 51–71 (AALVLTIVWSGTIALHLVSWG), 72–92 (SIFILGLTTVLGIHALGVVFA), 361–381 (FMLTMYILPTAAIPDLLMAVV), and 387–407 (MLGPVTGLSVTMSVVGMFAGL).

This sequence belongs to the glycosyltransferase 2 family. Requires Mg(2+) as cofactor.

Its subcellular location is the membrane. It catalyses the reaction a 1,2-diacyl-sn-glycerol + UDP-alpha-D-glucose = a 1,2-diacyl-3-O-(beta-D-glucopyranosyl)-sn-glycerol + UDP + H(+). Glucosyltransferase involved in the biosynthesis of the non-bilayer-forming membrane lipid beta-monoglucosyldiacylglycerol which contributes to regulate the properties and stability of the membrane. Catalyzes the transfer of a glucosyl residue from UDP-Glc to diacylglycerol (DAG) acceptor to form the corresponding beta-glucosyl-DAG (1,2-diacyl-3-O-(beta-D-glucopyranosyl)-sn-glycerol). It can only use UDP-Glc as sugar donor. This is Beta-monoglucosyldiacylglycerol synthase from Trichormus variabilis (strain ATCC 29413 / PCC 7937) (Anabaena variabilis).